Consider the following 641-residue polypeptide: Ribosomal oxygenase 1 (641 aa).

M1 bears the N-acetylmethionine mark. Disordered stretches follow at residues 1–35 and 54–80; these read MDGL…LPLR and RTQT…DALP. Basic residues predominate over residues 12–23; that stretch reads RRGRPKRRRKPQ. Phosphoserine is present on residues S60, S63, and S109. A JmjC domain is found at 294-439; sequence CSLRLLCPQA…DFLEAILPLA (146 aa). The Fe cation site is built by H340, D342, and H405.

Belongs to the ROX family. NO66 subfamily. Interacts with SP7/OSX; the interaction is direct. Interacts with MYC. Interacts with PHF19; leading to its recruitment to H3K36me3 sites. Fe(2+) serves as cofactor. Widely expressed. Overexpressed in lung carcinomas.

It localises to the nucleus. Its subcellular location is the nucleolus. It is found in the nucleoplasm. The catalysed reaction is N(6),N(6)-dimethyl-L-lysyl(36)-[histone H3] + 2 2-oxoglutarate + 2 O2 = L-lysyl(36)-[histone H3] + 2 formaldehyde + 2 succinate + 2 CO2. The enzyme catalyses N(6)-methyl-L-lysyl-[protein] + 2-oxoglutarate + O2 = L-lysyl-[protein] + formaldehyde + succinate + CO2. It catalyses the reaction L-histidyl-[protein] + 2-oxoglutarate + O2 = (3S)-3-hydroxy-L-histidyl-[protein] + succinate + CO2. Its function is as follows. Oxygenase that can act as both a histone lysine demethylase and a ribosomal histidine hydroxylase. Specifically demethylates 'Lys-4' (H3K4me) and 'Lys-36' (H3K36me) of histone H3, thereby playing a central role in histone code. Preferentially demethylates trimethylated H3 'Lys-4' (H3K4me3) and monomethylated H3 'Lys-4' (H3K4me1) residues, while it has weaker activity for dimethylated H3 'Lys-36' (H3K36me2). Acts as a regulator of osteoblast differentiation via its interaction with SP7/OSX by demethylating H3K4me and H3K36me, thereby inhibiting SP7/OSX-mediated promoter activation. Also catalyzes demethylation of non-histone proteins, such as CGAS: demethylation of monomethylated CGAS promotes interaction between CGAS and PARP1, followed by PARP1 inactivation. Also catalyzes the hydroxylation of 60S ribosomal protein L8 on 'His-216', thereby playing a role in ribosome biogenesis. Participates in MYC-induced transcriptional activation. This chain is Ribosomal oxygenase 1, found in Homo sapiens (Human).